The primary structure comprises 381 residues: Succinyl-diaminopimelate desuccinylase (381 aa).

His-76 lines the Zn(2+) pocket. Asp-78 is an active-site residue. Asp-107 provides a ligand contact to Zn(2+). The Proton acceptor role is filled by Glu-140. 3 residues coordinate Zn(2+): Glu-141, Glu-169, and His-354.

The protein belongs to the peptidase M20A family. DapE subfamily. In terms of assembly, homodimer. Zn(2+) serves as cofactor. The cofactor is Co(2+).

It catalyses the reaction N-succinyl-(2S,6S)-2,6-diaminopimelate + H2O = (2S,6S)-2,6-diaminopimelate + succinate. It participates in amino-acid biosynthesis; L-lysine biosynthesis via DAP pathway; LL-2,6-diaminopimelate from (S)-tetrahydrodipicolinate (succinylase route): step 3/3. Its function is as follows. Catalyzes the hydrolysis of N-succinyl-L,L-diaminopimelic acid (SDAP), forming succinate and LL-2,6-diaminopimelate (DAP), an intermediate involved in the bacterial biosynthesis of lysine and meso-diaminopimelic acid, an essential component of bacterial cell walls. The chain is Succinyl-diaminopimelate desuccinylase from Gluconobacter oxydans (strain 621H) (Gluconobacter suboxydans).